A 1017-amino-acid chain; its full sequence is GPI ethanolamine phosphate transferase 3 (1017 aa).

Residues 34 to 54 (FYIILLVFIAILQFISIAFFT) form a helical membrane-spanning segment. N-linked (GlcNAc...) asparagine glycans are attached at residues N66, N71, N100, N182, and N203. A helical membrane pass occupies residues 347–367 (VSSLALLMGQPIPFNNLGWPI). N411 carries N-linked (GlcNAc...) asparagine glycosylation. 6 helical membrane passes run 457-477 (LLATSLVLLISITKLIPSIVV), 484-504 (FVPGIIIMVLVTNLCFHGIFY), 515-535 (FWGTLLATAIGIIIGCYITIF), 558-578 (IAVMFMIIHALLFTSNSFTIW), 582-602 (IVAFLLSTFGMLTLYEFVFLP), and 644-664 (LGGYHSAVLIIFTRLASMITI). N-linked (GlcNAc...) asparagine glycosylation is found at N681 and N682. Residues 685–705 (WWVLGLCFLMIFILPACITGY) form a helical membrane-spanning segment. An N-linked (GlcNAc...) asparagine glycan is attached at N707. Residues 715–735 (AAPIWINVFLKGILGLNFVYW) traverse the membrane as a helical segment. N-linked (GlcNAc...) asparagine glycosylation occurs at N742. 6 consecutive transmembrane segments (helical) span residues 765–785 (IIAGFSLIASNVGWLMGPLCI), 806–826 (NIYGSEFFLLVINVLISILLF), 829–849 (PLAQLSYFLMCNQLLSILEII), 903–923 (IAIILNTFGPHILVSLSVALL), 947–967 (GILLTYNTILCLSSFIWVTHF), and 981–1001 (FIFASLSLIVTQLVVTFGTIA).

Belongs to the PIGG/PIGN/PIGO family. PIGO subfamily. Glycosylated.

It localises to the endoplasmic reticulum membrane. It participates in glycolipid biosynthesis; glycosylphosphatidylinositol-anchor biosynthesis. Functionally, involved in glycosylphosphatidylinositol-anchor biosynthesis. Transfers ethanolamine phosphate to the GPI third mannose which links the GPI-anchor to the C-terminus of the proteins by an amide bond. Involved in cell wall biosynthesis. The protein is GPI ethanolamine phosphate transferase 3 (GPI13) of Saccharomyces cerevisiae (strain ATCC 204508 / S288c) (Baker's yeast).